The primary structure comprises 473 residues: Glucose-1-phosphate adenylyltransferase small subunit, chloroplastic/amyloplastic (473 aa).

Positions 1-36 are disordered; sequence MDVPLASKTFPSPSPSKREQCNIDGHKSSSKHADLN. The segment covering 16–36 has biased composition (basic and acidic residues); sequence SKREQCNIDGHKSSSKHADLN.

Belongs to the bacterial/plant glucose-1-phosphate adenylyltransferase family. As to quaternary structure, heterotetramer. Abundantly expressed in the whole grains, a slightly less abundant expression is seen in leaves, while a low level expression is seen in the roots. A greater expression is seen in the endosperm than in the embryo and pericarp layers.

Its subcellular location is the plastid. It is found in the chloroplast. The protein localises to the amyloplast. It catalyses the reaction alpha-D-glucose 1-phosphate + ATP + H(+) = ADP-alpha-D-glucose + diphosphate. It functions in the pathway glycan biosynthesis; starch biosynthesis. Insensitive to 3'phosphoglycerate and orthophosphate. Its function is as follows. This protein plays a role in synthesis of starch. It catalyzes the synthesis of the activated glycosyl donor, ADP-glucose from Glc-1-P and ATP. The sequence is that of Glucose-1-phosphate adenylyltransferase small subunit, chloroplastic/amyloplastic (AGP-S) from Triticum aestivum (Wheat).